A 311-amino-acid chain; its full sequence is E3 ubiquitin-protein ligase RNF126 (311 aa).

An N-acetylalanine modification is found at Ala-2. Position 5 is a phosphoserine (Ser-5). Residues 5–100 (SPHPGRYFCH…FEIPTFPPGA (96 aa)) are required for interaction with BAG6. Cys-13, Cys-16, Cys-29, and Cys-32 together coordinate Zn(2+). The C4-type zinc finger occupies 13 to 32 (CHCCSVEIVPRLPDYICPRC). Disordered stretches follow at residues 42 to 64 (EETR…SRPP) and 94 to 132 (PTFP…ARLT). Residues 47–61 (TENGSAPSTAPTDQS) show a composition bias toward polar residues. The segment covering 103 to 116 (DDGRDPESRRERDH) has biased composition (basic and acidic residues). The span at 117 to 132 (PSRHRYGARQPRARLT) shows a compositional bias: basic residues. The tract at residues 200-304 (TGPPPADKEK…SSSSSSSPSN (105 aa)) is sufficient for interaction with AICDA. The RING-type zinc finger occupies 229–270 (CPVCKDDYALGERVRQLPCNHLFHDGCIVPWLEQHDSCPVCR). The segment at 277 to 311 (NTATNPPGLTGVSFSSSSSSSSSSSPSNENATSNS) is disordered. A compositionally biased stretch (low complexity) spans 289 to 311 (SFSSSSSSSSSSSPSNENATSNS).

Interacts with CCDC50, EGFR, FLT3 and SCAMP3. Interacts with BAG6 (via ubiquitin-like domain); required for BAG6-dependent ubiquitination of proteins mislocalized to the cytosol. Interacts with CDKN1A. Interacts with AICDA. Ubiquitinated. May undergo autoubiquitination. Highly expressed in liver and testis.

The protein localises to the cytoplasm. Its subcellular location is the nucleus. It catalyses the reaction S-ubiquitinyl-[E2 ubiquitin-conjugating enzyme]-L-cysteine + [acceptor protein]-L-lysine = [E2 ubiquitin-conjugating enzyme]-L-cysteine + N(6)-ubiquitinyl-[acceptor protein]-L-lysine.. Its pathway is protein modification; protein ubiquitination. Its function is as follows. E3 ubiquitin-protein ligase that mediates ubiquitination oF target proteins. Depending on the associated E2 ligase, mediates 'Lys-27'-, 'Lys-29'-, 'Lys-48'- and/or 'Lys-63'-linked polyubiquitination of substrates. Part of a BAG6-dependent quality control process ensuring that proteins of the secretory pathway that are mislocalized to the cytosol are degraded by the proteasome. Probably acts by providing the ubiquitin ligase activity associated with the BAG6 complex and be responsible for ubiquitination of the hydrophobic mislocalized proteins and their targeting to the proteasome. May also play a role in the endosomal recycling of IGF2R, the cation-independent mannose-6-phosphate receptor. May play a role in the endosomal sorting and degradation of several membrane receptors including EGFR, FLT3, MET and CXCR4, by mediating their ubiquitination. By ubiquitinating CDKN1A/p21 and targeting it for degradation, may also promote cell proliferation. May monoubiquitinate AICDA. Acts as a regulator of DNA repair by mediating 'Lys-27'- and 'Lys-29'-linked polyubiquitination of MRE11, thereby promoting the exonuclease activity of MRE11. The polypeptide is E3 ubiquitin-protein ligase RNF126 (Homo sapiens (Human)).